The sequence spans 211 residues: Beta-crystallin B3 (211 aa).

Met1 bears the N-acetylmethionine mark. An N-acetylalanine; in Beta-crystallin B3, N-terminally processed modification is found at Ala2. Residues 2 to 23 (AEQHGAPEQAAASKSHGGLGGS) form an N-terminal arm region. 2 Beta/gamma crystallin 'Greek key' domains span residues 24–63 (YKVT…QVES) and 64–108 (GPWL…RPLH). Residues 109–113 (IDGPD) form a connecting peptide region. Beta/gamma crystallin 'Greek key' domains lie at 114–155 (HKLH…RVIN) and 156–198 (GTWV…RRIR). A C-terminal arm region spans residues 200-211 (QKWHKRGCFLSS).

The protein belongs to the beta/gamma-crystallin family. As to quaternary structure, homo/heterodimer, or complexes of higher-order. The structure of beta-crystallin oligomers seems to be stabilized through interactions between the N-terminal arms.

Crystallins are the dominant structural components of the vertebrate eye lens. In Rattus norvegicus (Rat), this protein is Beta-crystallin B3 (Crybb3).